The primary structure comprises 411 residues: Serine hydroxymethyltransferase (411 aa).

Residues L119 and 123 to 125 contribute to the (6S)-5,6,7,8-tetrahydrofolate site; that span reads GHL. K228 bears the N6-(pyridoxal phosphate)lysine mark. 351–353 is a binding site for (6S)-5,6,7,8-tetrahydrofolate; that stretch reads SPF.

This sequence belongs to the SHMT family. In terms of assembly, homodimer. The cofactor is pyridoxal 5'-phosphate.

The protein localises to the cytoplasm. The catalysed reaction is (6R)-5,10-methylene-5,6,7,8-tetrahydrofolate + glycine + H2O = (6S)-5,6,7,8-tetrahydrofolate + L-serine. It participates in one-carbon metabolism; tetrahydrofolate interconversion. It functions in the pathway amino-acid biosynthesis; glycine biosynthesis; glycine from L-serine: step 1/1. In terms of biological role, catalyzes the reversible interconversion of serine and glycine with tetrahydrofolate (THF) serving as the one-carbon carrier. This reaction serves as the major source of one-carbon groups required for the biosynthesis of purines, thymidylate, methionine, and other important biomolecules. Also exhibits THF-independent aldolase activity toward beta-hydroxyamino acids, producing glycine and aldehydes, via a retro-aldol mechanism. The protein is Serine hydroxymethyltransferase of Clostridium beijerinckii (strain ATCC 51743 / NCIMB 8052) (Clostridium acetobutylicum).